Consider the following 1226-residue polypeptide: MGKDEGIPVRVALRCRPLVPKENNEGCKMCLTFVPGEQQVIVGTEKSFTYDYVFDPSAEQEEVYNSAVAPLIKGLFKGYNATVLAYGQTGSGKTYSMGGAYTHNQENEPTVGVIPRTVIALFREIHQRPEWEFNLKVSYLEIYNEEILDLLYAARDKTNTISIREDPKEGIKICGLTERDVKTALDTLSCLEQGNSSRTVASTAMNSQSSRSHAIFTISIEQRKEGDKNNSFRSKLHLVDLAGSERQKKTKAEGDRLKEGISINRGLLCLGNVISALGDESKKGGFVPYRDSKLTRLLQDSLGGNSHTLMIACVSPADSNMEETLNTLRYADRARKIKNKPIVNTDPQAAELQRLKLQVQELQVLLLQAHGGTLPVLNSMEPSENLQSLMERNKNLEKENGKLSRELGEAAVQTAQFLEKIIMTEQQNEKLGSKMEELKQHAACKVNLQRLVETLEDQELKDNVEVIQNLQQVIVQLQDESSGIAGSIEAMDEEAASFPVPEEDSGEKRSSDGFTTNHALRQAQLSKELIELNKALVMKEALAKKMAQNDRQLEPIQSEYLNNIKHLESEVGVLQKEKEELILALHSAKKDNNQAKLSERRRKRLQELEGQMTELKKKLGEQSKLLKLRESTEKTVAKMNQEIQGMKMQRVQLMRQMKEDAEKFRTWKQQKTKEVIQLKEKDRKRQYELLKLERDFQKQANVLRRKTEEAASANKRLKEALQRQKEAMEKRKDSQSKGMEGAASRVKNWLANEVEVLVSTEEAQRHLNDLLEDRKILAQDIAQLKQKTDAGERIPTKIRRRTYTVAELENLEEEASVTKQIESLETEMELRSAQIADLQQKLLDADGEEEMVKRRWETISNIMEAKCALKYLITELVSSKVAGSKLESSVKQNRAHVADLQKNIFEERNQMAEMETEHQSQLMQLEQHHQEKILYLLSQLQQKQASVPVTIEELPAEEITEREKQLMERLKFQDEEIEKMKALCEKNQQLLQENDMYKQKLALLHVASGKKLHNILPAAEICSPDSPFDFIPPKPRGKRRTNAKSAAVILEDLLSESESEEESDDKNWEPGNNSKQSKKLTSKCSCKARCGNKMCGCRKTKQNCSDDCFCDPSKCRNRDNHMDEGKHEDQSLESENSKIDYPDVTAGGSFFTPPCVTPTKKVLREISDIGQVLSIKLQRKPSTASASASVMESQENQTSILTKKKKVLCNSNTSFFSGCSAITEDE.

One can recognise a Kinesin motor domain in the interval 8 to 337; that stretch reads PVRVALRCRP…LRYADRARKI (330 aa). 87–94 provides a ligand contact to ATP; that stretch reads GQTGSGKT. A coiled-coil region spans residues 351–1006; that stretch reads ELQRLKLQVQ…YKQKLALLHV (656 aa). Over residues 494–505 the composition is skewed to acidic residues; it reads EAASFPVPEEDS. Disordered regions lie at residues 494–516, 722–741, and 1052–1078; these read EAASFPVPEEDSGEKRSSDGFTT, QRQKEAMEKRKDSQSKGMEG, and DLLSESESEEESDDKNWEPGNNSKQSK. Basic and acidic residues predominate over residues 722-735; sequence QRQKEAMEKRKDSQ. The tract at residues 1007 to 1226 is globular; sequence ASGKKLHNIL…SGCSAITEDE (220 aa). Residues 1053 to 1064 are compositionally biased toward acidic residues; that stretch reads LLSESESEEESD.

The protein belongs to the TRAFAC class myosin-kinesin ATPase superfamily. Kinesin family. Chromokinesin subfamily. [2Fe-2S] cluster serves as cofactor. Requires [4Fe-4S] cluster as cofactor. As to expression, expressed in oocytes, eggs, testes and brain.

The protein resides in the nucleus. It localises to the chromosome. It is found in the cytoplasm. The protein localises to the cytoskeleton. In terms of biological role, iron-sulfur (Fe-S) cluster binding motor protein that has a role in chromosome segregation during mitosis. Required for mitotic chromosomal positioning and bipolar spindle stabilization. The protein is Chromosome-associated kinesin KIF4 (kif4) of Xenopus laevis (African clawed frog).